The following is a 303-amino-acid chain: Aspartate carbamoyltransferase catalytic subunit (303 aa).

2 residues coordinate carbamoyl phosphate: Arg51 and Thr52. Residue Lys80 participates in L-aspartate binding. Residues Arg101, His129, and Gln132 each coordinate carbamoyl phosphate. Residues Arg162 and Arg221 each coordinate L-aspartate. Carbamoyl phosphate is bound by residues Leu260 and Pro261.

Belongs to the aspartate/ornithine carbamoyltransferase superfamily. ATCase family. Heterooligomer of catalytic and regulatory chains.

The enzyme catalyses carbamoyl phosphate + L-aspartate = N-carbamoyl-L-aspartate + phosphate + H(+). Its pathway is pyrimidine metabolism; UMP biosynthesis via de novo pathway; (S)-dihydroorotate from bicarbonate: step 2/3. Its function is as follows. Catalyzes the condensation of carbamoyl phosphate and aspartate to form carbamoyl aspartate and inorganic phosphate, the committed step in the de novo pyrimidine nucleotide biosynthesis pathway. The chain is Aspartate carbamoyltransferase catalytic subunit from Saccharolobus islandicus (strain M.16.4 / Kamchatka #3) (Sulfolobus islandicus).